The chain runs to 399 residues: Phosphomevalonate dehydratase large subunit (399 aa).

(R)-5-phosphomevalonate contacts are provided by G54, V55, S56, N85, and P86. C125 serves as a coordination point for [4Fe-4S] cluster. The (R)-5-phosphomevalonate site is built by E144 and S145. [4Fe-4S] cluster is bound by residues C298 and C355. Position 375 (K375) interacts with (R)-5-phosphomevalonate.

This sequence belongs to the AcnX type II large subunit family. In terms of assembly, heterodimer composed of a large subunit (PMDh-L) and a small subunit (PMDh-S). [4Fe-4S] cluster is required as a cofactor.

The catalysed reaction is (R)-5-phosphomevalonate = (2E)-3-methyl-5-phosphooxypent-2-enoate + H2O. It functions in the pathway isoprenoid biosynthesis; isopentenyl diphosphate biosynthesis via mevalonate pathway. In terms of biological role, component of a hydro-lyase that catalyzes the dehydration of mevalonate 5-phosphate (MVA5P) to form trans-anhydromevalonate 5-phosphate (tAHMP). Involved in the archaeal mevalonate (MVA) pathway, which provides fundamental precursors for isoprenoid biosynthesis, such as isopentenyl diphosphate (IPP) and dimethylallyl diphosphate (DMAPP). In Methanothermobacter thermautotrophicus (strain ATCC 29096 / DSM 1053 / JCM 10044 / NBRC 100330 / Delta H) (Methanobacterium thermoautotrophicum), this protein is Phosphomevalonate dehydratase large subunit.